A 118-amino-acid polypeptide reads, in one-letter code: Large ribosomal subunit protein bL20 (118 aa).

It belongs to the bacterial ribosomal protein bL20 family.

Binds directly to 23S ribosomal RNA and is necessary for the in vitro assembly process of the 50S ribosomal subunit. It is not involved in the protein synthesizing functions of that subunit. This Ectopseudomonas mendocina (strain ymp) (Pseudomonas mendocina) protein is Large ribosomal subunit protein bL20.